Reading from the N-terminus, the 517-residue chain is ATP synthase subunit alpha (517 aa).

Gly173–Thr180 is an ATP binding site.

Belongs to the ATPase alpha/beta chains family. F-type ATPases have 2 components, CF(1) - the catalytic core - and CF(0) - the membrane proton channel. CF(1) has five subunits: alpha(3), beta(3), gamma(1), delta(1), epsilon(1). CF(0) has three main subunits: a(1), b(2) and c(9-12). The alpha and beta chains form an alternating ring which encloses part of the gamma chain. CF(1) is attached to CF(0) by a central stalk formed by the gamma and epsilon chains, while a peripheral stalk is formed by the delta and b chains.

Its subcellular location is the cell inner membrane. The catalysed reaction is ATP + H2O + 4 H(+)(in) = ADP + phosphate + 5 H(+)(out). In terms of biological role, produces ATP from ADP in the presence of a proton gradient across the membrane. The alpha chain is a regulatory subunit. In Legionella pneumophila (strain Lens), this protein is ATP synthase subunit alpha.